We begin with the raw amino-acid sequence, 526 residues long: ATP synthase subunit alpha 2 (526 aa).

171-178 (GDRQTGKT) serves as a coordination point for ATP.

Belongs to the ATPase alpha/beta chains family. F-type ATPases have 2 components, CF(1) - the catalytic core - and CF(0) - the membrane proton channel. CF(1) has five subunits: alpha(3), beta(3), gamma(1), delta(1), epsilon(1). CF(0) has four main subunits: a(1), b(1), b'(1) and c(9-12).

It is found in the cell inner membrane. The enzyme catalyses ATP + H2O + 4 H(+)(in) = ADP + phosphate + 5 H(+)(out). In terms of biological role, produces ATP from ADP in the presence of a proton gradient across the membrane. The alpha chain is a regulatory subunit. The polypeptide is ATP synthase subunit alpha 2 (Chlorobium luteolum (strain DSM 273 / BCRC 81028 / 2530) (Pelodictyon luteolum)).